We begin with the raw amino-acid sequence, 277 residues long: Glycerol-3-phosphate acyltransferase (277 aa).

The next 5 membrane-spanning stretches (helical) occupy residues 3-23, 55-75, 79-99, 111-131, and 155-175; these read LFIFLILVGYLMGSINSAIIV, IMVMVFDALKGILPVILAKFL, PVTVAFTALAAVVGHMYPVFF, IGALLAFHFIIGVMVAATWLL, and LILVGNLNIFPPLFMITILVL. Residues 207–277 form a disordered region; sequence SPATSAEQEF…PKTKTVKEKE (71 aa). The segment covering 216–239 has biased composition (basic and acidic residues); the sequence is FPGKEVIDTNIDETEKTEQAEAVK. 2 stretches are compositionally biased toward basic residues: residues 240–253 and 262–271; these read KPKVKKATTKAKKT and KPKSTKPKTK.

This sequence belongs to the PlsY family. Probably interacts with PlsX.

It is found in the cell inner membrane. The enzyme catalyses an acyl phosphate + sn-glycerol 3-phosphate = a 1-acyl-sn-glycero-3-phosphate + phosphate. The protein operates within lipid metabolism; phospholipid metabolism. Its function is as follows. Catalyzes the transfer of an acyl group from acyl-phosphate (acyl-PO(4)) to glycerol-3-phosphate (G3P) to form lysophosphatidic acid (LPA). This enzyme utilizes acyl-phosphate as fatty acyl donor, but not acyl-CoA or acyl-ACP. The sequence is that of Glycerol-3-phosphate acyltransferase from Legionella pneumophila subsp. pneumophila (strain Philadelphia 1 / ATCC 33152 / DSM 7513).